We begin with the raw amino-acid sequence, 361 residues long: Innexin inx1 (361 aa).

Residues Met1–Asn28 are Cytoplasmic-facing. The helical transmembrane segment at Leu29 to Gly49 threads the bilayer. Residues Asn50–Tyr109 lie on the Extracellular side of the membrane. The helical transmembrane segment at Gln110–Trp130 threads the bilayer. The Cytoplasmic portion of the chain corresponds to Asp131–Trp181. A helical membrane pass occupies residues Phe182–Phe202. At Asp203 to Thr267 the chain is on the extracellular side. The helical transmembrane segment at Tyr268–Tyr288 threads the bilayer. Residues Arg289–Pro361 lie on the Cytoplasmic side of the membrane.

It belongs to the pannexin family. Expressed in embryonic neural precursors including the dorsal median neuroblast, glial cells, neuropilar glial ring, developing myoblasts cells and in a circumferential band of epithelial cells at the trochanter/coxa boundary stripe in the developing limb.

Its subcellular location is the cell membrane. The protein resides in the cell junction. It localises to the gap junction. Functionally, structural components of the gap junctions. In Schistocerca americana (American grasshopper), this protein is Innexin inx1 (inx1).